The primary structure comprises 645 residues: Sodium/potassium/calcium exchanger 3 (645 aa).

An N-terminal signal peptide occupies residues 1–43; it reads MPPPGDQDCARRRSRRRRRDLLLSQLCFLASVALLLWSLSSLR. At 44–106 the chain is on the extracellular side; the sequence is EQKELDLMDL…DIFSNEDRRQ (63 aa). Asn70 and Asn85 each carry an N-linked (GlcNAc...) asparagine glycan. Residues 107–127 traverse the membrane as a helical segment; that stretch reads GAVVLHVLCAMYMFYALAIVC. Over 128-151 the chain is Cytoplasmic; the sequence is DDFFVPSLEKICERLHLSEDVAGA. The Alpha-1 repeat unit spans residues 148-188; sequence VAGATFMAAGSSAPELFTSVIGVFITKGDVGVGTIVGSAVF. The chain crosses the membrane as a helical span at residues 152–172; sequence TFMAAGSSAPELFTSVIGVFI. Residues 173–181 are Extracellular-facing; it reads TKGDVGVGT. The helical transmembrane segment at 182-202 threads the bilayer; it reads IVGSAVFNILCIIGVCGLFAG. The Cytoplasmic segment spans residues 203–209; it reads QVVALSS. The helical transmembrane segment at 210-230 threads the bilayer; that stretch reads WCLLRDSIYYTLSVVALIVFI. At 231–234 the chain is on the extracellular side; that stretch reads YDEK. The chain crosses the membrane as a helical span at residues 235–255; sequence VSWWESLVLVLMYLIYIVIMK. Topologically, residues 256–486 are cytoplasmic; the sequence is YNACIHQCFE…WFMVTFASST (231 aa). Ser307 bears the Phosphoserine mark. Disordered stretches follow at residues 379–398 and 404–442; these read TVEN…NGTR and AETD…PFDP. The segment covering 404–435 has biased composition (acidic residues); sequence AETDNETENENEDNENNENDEEEEEDEDDDEG. Residues 487 to 507 traverse the membrane as a helical segment; it reads LWIAAFSYMMVWMVTIIGYTL. At 508 to 512 the chain is on the extracellular side; that stretch reads GIPDV. A helical transmembrane segment spans residues 513–533; sequence IMGITFLAAGTSVPDCMASLI. The stretch at 520 to 551 is one Alpha-2 repeat; that stretch reads AAGTSVPDCMASLIVARQGMGDMAVSNSIGSN. The Cytoplasmic segment spans residues 534-551; it reads VARQGMGDMAVSNSIGSN. A helical transmembrane segment spans residues 552-572; the sequence is VFDILIGLGLPWALQTLAVDY. Topologically, residues 573-582 are extracellular; it reads GSYIRLNSRG. Residues 583–603 form a helical membrane-spanning segment; the sequence is LIYSVGLLLASVFVTVFGVHL. The Cytoplasmic segment spans residues 604 to 617; the sequence is NKWQLDKKLGCGCL. Residues 618-638 form a helical membrane-spanning segment; the sequence is FLYGVFLCFSIMTEFNVFTFV. The Extracellular portion of the chain corresponds to 639–645; the sequence is NLPMCGD.

The protein belongs to the Ca(2+):cation antiporter (CaCA) (TC 2.A.19) family. SLC24A subfamily. Abundant in the brain. Highest levels found in selected thalamic nuclei, hippocampal CA1 neurons and in layer IV of the cerebral cortex. Expressed in dental tissues.

The protein resides in the cell membrane. It carries out the reaction Ca(2+)(out) + K(+)(out) + 4 Na(+)(in) = Ca(2+)(in) + K(+)(in) + 4 Na(+)(out). Functionally, calcium, potassium:sodium antiporter that transports 1 Ca(2+) and 1 K(+) in exchange for 4 Na(+). This Mus musculus (Mouse) protein is Sodium/potassium/calcium exchanger 3 (Slc24a3).